Here is a 235-residue protein sequence, read N- to C-terminus: Biosynthetic peptidoglycan transglycosylase (235 aa).

The chain crosses the membrane as a helical span at residues 12–34; that stretch reads GLGKLLLAALLSTIVSVALLRFI.

It belongs to the glycosyltransferase 51 family.

Its subcellular location is the cell inner membrane. It carries out the reaction [GlcNAc-(1-&gt;4)-Mur2Ac(oyl-L-Ala-gamma-D-Glu-L-Lys-D-Ala-D-Ala)](n)-di-trans,octa-cis-undecaprenyl diphosphate + beta-D-GlcNAc-(1-&gt;4)-Mur2Ac(oyl-L-Ala-gamma-D-Glu-L-Lys-D-Ala-D-Ala)-di-trans,octa-cis-undecaprenyl diphosphate = [GlcNAc-(1-&gt;4)-Mur2Ac(oyl-L-Ala-gamma-D-Glu-L-Lys-D-Ala-D-Ala)](n+1)-di-trans,octa-cis-undecaprenyl diphosphate + di-trans,octa-cis-undecaprenyl diphosphate + H(+). The protein operates within cell wall biogenesis; peptidoglycan biosynthesis. Peptidoglycan polymerase that catalyzes glycan chain elongation from lipid-linked precursors. This is Biosynthetic peptidoglycan transglycosylase from Aeromonas hydrophila subsp. hydrophila (strain ATCC 7966 / DSM 30187 / BCRC 13018 / CCUG 14551 / JCM 1027 / KCTC 2358 / NCIMB 9240 / NCTC 8049).